Consider the following 87-residue polypeptide: TIKEKQASILALFEHLTSVPKQHIPEKERDNRLHDVGHLSRGKLFSLFHREHLEEATHLYEILHAAKNFDDFLLLCKQARDFVNEGM.

This sequence belongs to the tyrosinase family. Hemocyanin subfamily. As to quaternary structure, polymer that contains six different types of chains (alpha, beta, gamma, delta, epsilon, and zeta). Hemolymph.

Its subcellular location is the secreted. It is found in the extracellular space. Functionally, hemocyanins are copper-containing oxygen carriers occurring freely dissolved in the hemolymph of many mollusks and arthropods. In Tachypleus tridentatus (Japanese horseshoe crab), this protein is Hemocyanin alpha chain.